Reading from the N-terminus, the 609-residue chain is Phosphomethylpyrimidine synthase (609 aa).

Residues Asn-219, Met-248, Tyr-277, His-313, 333–335 (SRG), 374–377 (DGLR), and Glu-413 each bind substrate. Residue His-417 coordinates Zn(2+). Residue Tyr-440 participates in substrate binding. Position 481 (His-481) interacts with Zn(2+). [4Fe-4S] cluster is bound by residues Cys-561, Cys-564, and Cys-569.

Belongs to the ThiC family. Requires [4Fe-4S] cluster as cofactor.

The catalysed reaction is 5-amino-1-(5-phospho-beta-D-ribosyl)imidazole + S-adenosyl-L-methionine = 4-amino-2-methyl-5-(phosphooxymethyl)pyrimidine + CO + 5'-deoxyadenosine + formate + L-methionine + 3 H(+). Its pathway is cofactor biosynthesis; thiamine diphosphate biosynthesis. Functionally, catalyzes the synthesis of the hydroxymethylpyrimidine phosphate (HMP-P) moiety of thiamine from aminoimidazole ribotide (AIR) in a radical S-adenosyl-L-methionine (SAM)-dependent reaction. This chain is Phosphomethylpyrimidine synthase, found in Deinococcus geothermalis (strain DSM 11300 / CIP 105573 / AG-3a).